Consider the following 342-residue polypeptide: Ketol-acid reductoisomerase (NADP(+)) (342 aa).

In terms of domain architecture, KARI N-terminal Rossmann spans 2–182; that stretch reads AEMFYDDDAD…GGLRAGGIKT (181 aa). NADP(+) is bound by residues 25–28, Lys48, Ser51, Ser53, and 83–86; these read FGSQ and DHLQ. Residue His108 is part of the active site. Position 134 (Gly134) interacts with NADP(+). A KARI C-terminal knotted domain is found at 183–328; it reads TFTEETETDL…RELRKLMAWV (146 aa). Positions 191, 195, 227, and 231 each coordinate Mg(2+). Ser252 lines the substrate pocket.

This sequence belongs to the ketol-acid reductoisomerase family. Mg(2+) serves as cofactor.

The enzyme catalyses (2R)-2,3-dihydroxy-3-methylbutanoate + NADP(+) = (2S)-2-acetolactate + NADPH + H(+). It carries out the reaction (2R,3R)-2,3-dihydroxy-3-methylpentanoate + NADP(+) = (S)-2-ethyl-2-hydroxy-3-oxobutanoate + NADPH + H(+). The protein operates within amino-acid biosynthesis; L-isoleucine biosynthesis; L-isoleucine from 2-oxobutanoate: step 2/4. Its pathway is amino-acid biosynthesis; L-valine biosynthesis; L-valine from pyruvate: step 2/4. In terms of biological role, involved in the biosynthesis of branched-chain amino acids (BCAA). Catalyzes an alkyl-migration followed by a ketol-acid reduction of (S)-2-acetolactate (S2AL) to yield (R)-2,3-dihydroxy-isovalerate. In the isomerase reaction, S2AL is rearranged via a Mg-dependent methyl migration to produce 3-hydroxy-3-methyl-2-ketobutyrate (HMKB). In the reductase reaction, this 2-ketoacid undergoes a metal-dependent reduction by NADPH to yield (R)-2,3-dihydroxy-isovalerate. This chain is Ketol-acid reductoisomerase (NADP(+)), found in Kineococcus radiotolerans (strain ATCC BAA-149 / DSM 14245 / SRS30216).